We begin with the raw amino-acid sequence, 196 residues long: Pycsar effector protein GmPycTM (196 aa).

The next 3 helical transmembrane spans lie at 34–54, 82–102, and 176–196; these read ISFSLAFAGILLGGFFSSGII, ITTIVLVVFIILMIVSLTYLF, and VNWLIASTIVFIILNGMFLFL.

Its subcellular location is the cell inner membrane. In terms of biological role, pycsar (pyrimidine cyclase system for antiphage resistance) provides immunity against bacteriophage. The pyrimidine cyclase (PycC) synthesizes cyclic nucleotides in response to infection; these serve as specific second messenger signals. The signals activate the adjacent effector, leading to bacterial cell death and abortive phage infection. A clade C Pycsar system. Functionally, the effector gene of a two-gene Pycsar system. Expression of this and adjacent uridylate cyclase GmPycC (AC P0DV42) probably confers resistance to bacteriophage. The genes are probably only expressed in response to bacteriophage infection. Probably only responds to cUMP (produced by its cognate NTP cyclase), acts by impairing membrane integrity. The polypeptide is Pycsar effector protein GmPycTM (Gulbenkiania mobilis).